Here is a 677-residue protein sequence, read N- to C-terminus: WD repeat-containing protein 43 (677 aa).

6 WD repeats span residues 11–51 (PLAP…LHQE), 57–119 (HLSG…LHSK), 124–163 (GHDN…VKCK), 166–205 (GDNS…RHFT), 207–259 (HATP…KEKS), and 267–309 (TDEP…YCKK). At S77 the chain carries Phosphoserine. K309 participates in a covalent cross-link: Glycyl lysine isopeptide (Lys-Gly) (interchain with G-Cter in SUMO1); alternate. Residue K309 forms a Glycyl lysine isopeptide (Lys-Gly) (interchain with G-Cter in SUMO2); alternate linkage. The residue at position 321 (T321) is a Phosphothreonine. K384 participates in a covalent cross-link: Glycyl lysine isopeptide (Lys-Gly) (interchain with G-Cter in SUMO1); alternate. K384 is covalently cross-linked (Glycyl lysine isopeptide (Lys-Gly) (interchain with G-Cter in SUMO2); alternate). At T394 the chain carries Phosphothreonine. Residues S399, S431, S437, and S590 each carry the phosphoserine modification. Disordered regions lie at residues 414-445 (AIKP…LGAM) and 582-677 (SEKT…SEEE). Positions 582–592 (SEKTKGATSPG) are enriched in polar residues. Over residues 600–652 (EEESSEEESDDEIADKDSEDNWDEDEEESESEKDEDVEEEDEDAEGKDEENGE) the composition is skewed to acidic residues. The segment covering 653–663 (DRDTASEKELN) has biased composition (basic and acidic residues). Residue T656 is modified to Phosphothreonine. S658 bears the Phosphoserine mark. Positions 664-677 (GDSDLDPENESEEE) are enriched in acidic residues.

This sequence belongs to the UTP5 family. In terms of assembly, part of the small subunit (SSU) processome, composed of more than 70 proteins and the RNA chaperone small nucleolar RNA (snoRNA) U3. May be a component of the proposed t-UTP subcomplex of the ribosomal small subunit (SSU) processome containing at least UTP4, WDR43, HEATR1, UTP15, WDR75. Binds to RNA; binding is required for its chromatin association. Interacts with CDK9, DDX21 and SUPT6H. Interacts with RNA polymerase II. Interacts directly with UTP4 and UTP15.

It is found in the nucleus. It localises to the nucleolus. Its subcellular location is the nucleolus fibrillar center. The protein resides in the nucleoplasm. In terms of biological role, ribosome biogenesis factor that coordinates hyperactive transcription and ribogenesis. Part of the small subunit (SSU) processome, first precursor of the small eukaryotic ribosomal subunit. During the assembly of the SSU processome in the nucleolus, many ribosome biogenesis factors, an RNA chaperone and ribosomal proteins associate with the nascent pre-rRNA and work in concert to generate RNA folding, modifications, rearrangements and cleavage as well as targeted degradation of pre-ribosomal RNA by the RNA exosome. Involved in nucleolar processing of pre-18S ribosomal RNA. Required for optimal pre-ribosomal RNA transcription by RNA polymerase I. Essential for stem cell pluripotency and embryonic development. In the nucleoplasm, recruited by promoter-associated/nascent transcripts and transcription to active promoters where it facilitates releases of elongation factor P-TEFb and paused RNA polymerase II to allow transcription elongation and maintain high-level expression of its targets genes. This chain is WD repeat-containing protein 43, found in Homo sapiens (Human).